The sequence spans 344 residues: MRNVQAQPLVSPTEPMIDPFGRAVTYLRVSVTDRCDFRCTYCMAEHMTFLPKKDLLTLEELDRLCSVFIEKGVRKLRLTGGEPLVRKNIMHLIGNLSRHLKSGALDELTLTTNGSQLARFAGELADCGVRRINVSLDTLNPEKFRTITRWGDLSRVLEGIDAAQKAGIHVKINAVALKDFNDAEIPELIRWAHGRSMDVTLIETMPMGEIEFDRTDQYLPLSQVRADLASQFTLADIPYRTGGPARYVTISETGGRLGFITPMTHNFCESCNRVRLTCTGMLYMCLGQNDDADLRKALRESESDEHLSQAIDEAISRKPKGHDFIIDREHNRPSVARHMSLTGG.

Residues 19–245 form the Radical SAM core domain; that stretch reads PFGRAVTYLR…DIPYRTGGPA (227 aa). Arg-28 contributes to the GTP binding site. [4Fe-4S] cluster-binding residues include Cys-35 and Cys-39. Residue Tyr-41 participates in S-adenosyl-L-methionine binding. Cys-42 is a binding site for [4Fe-4S] cluster. Arg-77 serves as a coordination point for GTP. Gly-81 is an S-adenosyl-L-methionine binding site. Thr-111 provides a ligand contact to GTP. Ser-135 is an S-adenosyl-L-methionine binding site. Lys-171 provides a ligand contact to GTP. S-adenosyl-L-methionine is bound at residue Met-205. Positions 268 and 271 each coordinate [4Fe-4S] cluster. GTP is bound at residue 273–275; the sequence is RVR. Cys-285 provides a ligand contact to [4Fe-4S] cluster.

The protein belongs to the radical SAM superfamily. MoaA family. Monomer and homodimer. The cofactor is [4Fe-4S] cluster.

It catalyses the reaction GTP + AH2 + S-adenosyl-L-methionine = (8S)-3',8-cyclo-7,8-dihydroguanosine 5'-triphosphate + 5'-deoxyadenosine + L-methionine + A + H(+). It participates in cofactor biosynthesis; molybdopterin biosynthesis. In terms of biological role, catalyzes the cyclization of GTP to (8S)-3',8-cyclo-7,8-dihydroguanosine 5'-triphosphate. The sequence is that of GTP 3',8-cyclase from Brucella ovis (strain ATCC 25840 / 63/290 / NCTC 10512).